We begin with the raw amino-acid sequence, 152 residues long: MKTPIEVKILDSRIGSQFPLPAYATPGSAGMDLRAMLETSIQVAPGETILIPTGISIHVADSSLAAVILPRSGLGHKHGIVLGNLVGLIDSDYQGPLMVSCWNRGSEPFTLEIGDRLAQLVFVPVVQAEFKLVDEFDNSSRGEGGFGHSGTK.

Residues 71-73, N84, 88-90, and M98 contribute to the substrate site; these read RSG and LID.

This sequence belongs to the dUTPase family. It depends on Mg(2+) as a cofactor.

The catalysed reaction is dUTP + H2O = dUMP + diphosphate + H(+). It functions in the pathway pyrimidine metabolism; dUMP biosynthesis; dUMP from dCTP (dUTP route): step 2/2. Its function is as follows. This enzyme is involved in nucleotide metabolism: it produces dUMP, the immediate precursor of thymidine nucleotides and it decreases the intracellular concentration of dUTP so that uracil cannot be incorporated into DNA. This Shewanella sediminis (strain HAW-EB3) protein is Deoxyuridine 5'-triphosphate nucleotidohydrolase.